Reading from the N-terminus, the 104-residue chain is Pyrimidine/purine nucleoside phosphorylase (104 aa).

This sequence belongs to the nucleoside phosphorylase PpnP family.

The catalysed reaction is a purine D-ribonucleoside + phosphate = a purine nucleobase + alpha-D-ribose 1-phosphate. It catalyses the reaction adenosine + phosphate = alpha-D-ribose 1-phosphate + adenine. It carries out the reaction cytidine + phosphate = cytosine + alpha-D-ribose 1-phosphate. The enzyme catalyses guanosine + phosphate = alpha-D-ribose 1-phosphate + guanine. The catalysed reaction is inosine + phosphate = alpha-D-ribose 1-phosphate + hypoxanthine. It catalyses the reaction thymidine + phosphate = 2-deoxy-alpha-D-ribose 1-phosphate + thymine. It carries out the reaction uridine + phosphate = alpha-D-ribose 1-phosphate + uracil. The enzyme catalyses xanthosine + phosphate = alpha-D-ribose 1-phosphate + xanthine. In terms of biological role, catalyzes the phosphorolysis of diverse nucleosides, yielding D-ribose 1-phosphate and the respective free bases. Can use uridine, adenosine, guanosine, cytidine, thymidine, inosine and xanthosine as substrates. Also catalyzes the reverse reactions. In Leptothrix cholodnii (strain ATCC 51168 / LMG 8142 / SP-6) (Leptothrix discophora (strain SP-6)), this protein is Pyrimidine/purine nucleoside phosphorylase.